The primary structure comprises 521 residues: BAR/IMD domain-containing adapter protein 2 (521 aa).

In terms of domain architecture, IMD spans 1–250 (MSLSRSEEMH…VQLMQQMGNS (250 aa)). Positions 132–153 (DALDKCQAELKKLRKKSQGSKN) form a coiled coil. 4 positions are modified to phosphoserine: serine 262, serine 324, serine 326, and serine 337. The disordered stretch occupies residues 297 to 370 (APVMNGVSGP…TLPRSSSMAA (74 aa)). A compositionally biased stretch (low complexity) spans 321-333 (QPKSTSPPQSQSK). Position 341 is a phosphothreonine (threonine 341). Residue serine 347 is modified to Phosphoserine. Residues 353–368 (SYATTENKTLPRSSSM) are compositionally biased toward polar residues. A Phosphothreonine modification is found at threonine 361. Phosphoserine occurs at positions 367, 385, 396, and 455. The region spanning 375–438 (NGRMRVKAIF…PFSYTRVLDN (64 aa)) is the SH3 domain. The tract at residues 450–471 (QGKSSSTGNLLDKEDLALPPPD) is disordered.

As to quaternary structure, homodimer. Interacts with CDC42 and RAC1 that have been activated by GTP binding. Interacts with ATN1, ADGRB1, DIAPH1, EPS8, SHANK1, SHANK2, SHANK3, TIAM1, WASF1 and WASF2. Interacts with ENAH after recruitment of CDC42. Phosphorylated on tyrosine residues by INSR in response to insulin treatment.

The protein localises to the cytoplasm. It localises to the membrane. It is found in the cell projection. The protein resides in the filopodium. Its subcellular location is the ruffle. The protein localises to the cytoskeleton. Adapter protein that links membrane-bound small G-proteins to cytoplasmic effector proteins. Necessary for CDC42-mediated reorganization of the actin cytoskeleton and for RAC1-mediated membrane ruffling. Involved in the regulation of the actin cytoskeleton by WASF family members and the Arp2/3 complex. Plays a role in neurite growth. Acts syngeristically with ENAH to promote filipodia formation. Plays a role in the reorganization of the actin cytoskeleton in response to bacterial infection. Participates in actin bundling when associated with EPS8, promoting filopodial protrusions. This Bos taurus (Bovine) protein is BAR/IMD domain-containing adapter protein 2 (BAIAP2).